A 284-amino-acid chain; its full sequence is Formamidopyrimidine-DNA glycosylase (284 aa).

Residue P2 is the Schiff-base intermediate with DNA of the active site. E3 serves as the catalytic Proton donor. K61 acts as the Proton donor; for beta-elimination activity in catalysis. 3 residues coordinate DNA: H95, R114, and R159. The segment at 244–278 (WVYGRKGQPCRVCNTPIERIRLAGRSTHFCPTCQR) adopts an FPG-type zinc-finger fold. The active-site Proton donor; for delta-elimination activity is the R268.

It belongs to the FPG family. Monomer. Zn(2+) is required as a cofactor.

The catalysed reaction is Hydrolysis of DNA containing ring-opened 7-methylguanine residues, releasing 2,6-diamino-4-hydroxy-5-(N-methyl)formamidopyrimidine.. The enzyme catalyses 2'-deoxyribonucleotide-(2'-deoxyribose 5'-phosphate)-2'-deoxyribonucleotide-DNA = a 3'-end 2'-deoxyribonucleotide-(2,3-dehydro-2,3-deoxyribose 5'-phosphate)-DNA + a 5'-end 5'-phospho-2'-deoxyribonucleoside-DNA + H(+). Its function is as follows. Involved in base excision repair of DNA damaged by oxidation or by mutagenic agents. Acts as a DNA glycosylase that recognizes and removes damaged bases. Has a preference for oxidized purines, such as 7,8-dihydro-8-oxoguanine (8-oxoG). Has AP (apurinic/apyrimidinic) lyase activity and introduces nicks in the DNA strand. Cleaves the DNA backbone by beta-delta elimination to generate a single-strand break at the site of the removed base with both 3'- and 5'-phosphates. The protein is Formamidopyrimidine-DNA glycosylase of Gloeobacter violaceus (strain ATCC 29082 / PCC 7421).